The chain runs to 851 residues: DNA mismatch repair protein MutS (851 aa).

602 to 609 (GPNMSGKS) lines the ATP pocket.

This sequence belongs to the DNA mismatch repair MutS family.

In terms of biological role, this protein is involved in the repair of mismatches in DNA. It is possible that it carries out the mismatch recognition step. This protein has a weak ATPase activity. The sequence is that of DNA mismatch repair protein MutS from Streptococcus pyogenes serotype M2 (strain MGAS10270).